A 362-amino-acid chain; its full sequence is Patr class I histocompatibility antigen, B-2 alpha chain (362 aa).

Positions 1–24 (MQVTAPRTVLLLLSAALALTETWA) are cleaved as a signal peptide. The alpha-1 stretch occupies residues 25–114 (GSHSMKYFYT…LRGYYNQSEA (90 aa)). The Extracellular segment spans residues 25 to 308 (GSHSMKYFYT…EPSSQSTIPI (284 aa)). Asparagine 110 is a glycosylation site (N-linked (GlcNAc...) asparagine). The tract at residues 115–206 (GSHIIQRMYG…ENGKETLQRA (92 aa)) is alpha-2. 2 cysteine pairs are disulfide-bonded: cysteine 125-cysteine 188 and cysteine 227-cysteine 283. The alpha-3 stretch occupies residues 207 to 298 (DPPKTHVTHH…GLPKPLTLRW (92 aa)). The region spanning 209–295 (PKTHVTHHPI…QHEGLPKPLT (87 aa)) is the Ig-like C1-type domain. The segment at 299–308 (EPSSQSTIPI) is connecting peptide. Residues 309–332 (VGIVAGLAVLAVVVIGAVVAAVMC) form a helical membrane-spanning segment. At 333–362 (RRKSSGGKGGSYSQAASSDSAQGSDVSLTA) the chain is on the cytoplasmic side. The interval 336 to 362 (SSGGKGGSYSQAASSDSAQGSDVSLTA) is disordered. A compositionally biased stretch (low complexity) spans 343–362 (SYSQAASSDSAQGSDVSLTA).

This sequence belongs to the MHC class I family. As to quaternary structure, heterodimer of an alpha chain and a beta chain (beta-2-microglobulin).

Its subcellular location is the membrane. Functionally, involved in the presentation of foreign antigens to the immune system. This Pan troglodytes (Chimpanzee) protein is Patr class I histocompatibility antigen, B-2 alpha chain.